Consider the following 316-residue polypeptide: Beta-agarase (316 aa).

A signal peptide spans 1 to 18; that stretch reads MKRKLFTICLASLQFACA. A GH16 domain is found at 27-315; sequence YEWDIYPVPA…WIRVYTLVPE (289 aa). Substrate contacts are provided by residues W78, 87 to 97, and 101 to 103; these read QRDHVSVSDGF and RAS. E167 acts as the Nucleophile in catalysis. The active-site Proton donor is E172. R197 contributes to the substrate binding site.

This sequence belongs to the glycosyl hydrolase 16 family.

The enzyme catalyses Hydrolysis of (1-&gt;4)-beta-D-galactosidic linkages in agarose, giving the tetramer as the predominant product.. Its function is as follows. Cleaves the beta-1,4-linkages between beta-D-galactose and alpha-L-3,6-anhydro-galactose residues in agarose. Cleaves agarose in a random manner with retention of the anomeric-bond configuration, producing beta-anomers that give rise progressively to alpha-anomers when mutarotation takes place. This is Beta-agarase from Phocaeicola plebeius (strain DSM 17135 / JCM 12973 / CCUG 54634 / M2) (Bacteroides plebeius).